The chain runs to 244 residues: Exosome complex component Rrp41 (244 aa).

It belongs to the RNase PH family. Rrp41 subfamily. In terms of assembly, component of the archaeal exosome complex. Forms a hexameric ring-like arrangement composed of 3 Rrp41-Rrp42 heterodimers. The hexameric ring associates with a trimer of Rrp4 and/or Csl4 subunits.

It is found in the cytoplasm. Catalytic component of the exosome, which is a complex involved in RNA degradation. Has 3'-&gt;5' exoribonuclease activity. Can also synthesize heteromeric RNA-tails. The polypeptide is Exosome complex component Rrp41 (Nitrosopumilus maritimus (strain SCM1)).